The sequence spans 134 residues: Transcription antitermination protein NusB (134 aa).

This sequence belongs to the NusB family.

In terms of biological role, involved in transcription antitermination. Required for transcription of ribosomal RNA (rRNA) genes. Binds specifically to the boxA antiterminator sequence of the ribosomal RNA (rrn) operons. The polypeptide is Transcription antitermination protein NusB (Halothermothrix orenii (strain H 168 / OCM 544 / DSM 9562)).